The primary structure comprises 438 residues: Tol-Pal system protein TolB (438 aa).

Positions 1–21 (MVKRSLLVLALLICLPATLFA) are cleaved as a signal peptide.

Belongs to the TolB family. As to quaternary structure, the Tol-Pal system is composed of five core proteins: the inner membrane proteins TolA, TolQ and TolR, the periplasmic protein TolB and the outer membrane protein Pal. They form a network linking the inner and outer membranes and the peptidoglycan layer.

It localises to the periplasm. Its function is as follows. Part of the Tol-Pal system, which plays a role in outer membrane invagination during cell division and is important for maintaining outer membrane integrity. This chain is Tol-Pal system protein TolB, found in Desulfosudis oleivorans (strain DSM 6200 / JCM 39069 / Hxd3) (Desulfococcus oleovorans).